Here is a 150-residue protein sequence, read N- to C-terminus: Cytochrome c oxidase subunit 5A, mitochondrial (150 aa).

Residues 1–41 constitute a mitochondrion transit peptide; that stretch reads MLGAALRRCAVAATARAGPRGLLHSAPTPGPAAAIQSVRCY. The short motif at 2–17 is the SIFI-degron element; sequence LGAALRRCAVAATARA. 2 positions are modified to N6-acetyllysine: K87 and K113. T141 is modified (phosphothreonine).

It belongs to the cytochrome c oxidase subunit 5A family. As to quaternary structure, component of the cytochrome c oxidase (complex IV, CIV), a multisubunit enzyme composed of 14 subunits. The complex is composed of a catalytic core of 3 subunits MT-CO1, MT-CO2 and MT-CO3, encoded in the mitochondrial DNA, and 11 supernumerary subunits COX4I, COX5A, COX5B, COX6A, COX6B, COX6C, COX7A, COX7B, COX7C, COX8 and NDUFA4, which are encoded in the nuclear genome. The complex exists as a monomer or a dimer and forms supercomplexes (SCs) in the inner mitochondrial membrane with NADH-ubiquinone oxidoreductase (complex I, CI) and ubiquinol-cytochrome c oxidoreductase (cytochrome b-c1 complex, complex III, CIII), resulting in different assemblies (supercomplex SCI(1)III(2)IV(1) and megacomplex MCI(2)III(2)IV(2)). Interacts with AFG1L. Interacts with RAB5IF. Post-translationally, in response to mitochondrial stress, the precursor protein is ubiquitinated by the SIFI complex in the cytoplasm before mitochondrial import, leading to its degradation. Within the SIFI complex, UBR4 initiates ubiquitin chain that are further elongated or branched by KCMF1.

It is found in the mitochondrion inner membrane. It participates in energy metabolism; oxidative phosphorylation. Functionally, component of the cytochrome c oxidase, the last enzyme in the mitochondrial electron transport chain which drives oxidative phosphorylation. The respiratory chain contains 3 multisubunit complexes succinate dehydrogenase (complex II, CII), ubiquinol-cytochrome c oxidoreductase (cytochrome b-c1 complex, complex III, CIII) and cytochrome c oxidase (complex IV, CIV), that cooperate to transfer electrons derived from NADH and succinate to molecular oxygen, creating an electrochemical gradient over the inner membrane that drives transmembrane transport and the ATP synthase. Cytochrome c oxidase is the component of the respiratory chain that catalyzes the reduction of oxygen to water. Electrons originating from reduced cytochrome c in the intermembrane space (IMS) are transferred via the dinuclear copper A center (CU(A)) of subunit 2 and heme A of subunit 1 to the active site in subunit 1, a binuclear center (BNC) formed by heme A3 and copper B (CU(B)). The BNC reduces molecular oxygen to 2 water molecules using 4 electrons from cytochrome c in the IMS and 4 protons from the mitochondrial matrix. The sequence is that of Cytochrome c oxidase subunit 5A, mitochondrial (COX5A) from Cebuella pygmaea (Pygmy marmoset).